We begin with the raw amino-acid sequence, 340 residues long: Chitinase 7 (340 aa).

Positions 1 to 32 are cleaved as a signal peptide; sequence MIAARAANLQVAMKALALAVLALAYAAATARA. The 41-residue stretch at 33 to 73 folds into the Chitin-binding type-1 domain; the sequence is EQCGRQAGGARCPNRLCCSRWGWCGLTDDYCKGGCQSQCRV. Intrachain disulfides connect C35–C50, C44–C56, C49–C63, C67–C71, C118–C173, C185–C193, and C293–C323.

It belongs to the glycosyl hydrolase 19 family. Chitinase class I subfamily. As to expression, expressed in pistils, stamens and lodicules.

It catalyses the reaction Random endo-hydrolysis of N-acetyl-beta-D-glucosaminide (1-&gt;4)-beta-linkages in chitin and chitodextrins.. Functionally, hydrolyzes chitin and may play a role in defense against fungal pathogens containing chitin. This Oryza sativa subsp. japonica (Rice) protein is Chitinase 7 (Cht7).